A 129-amino-acid polypeptide reads, in one-letter code: Phosphoribosyl-AMP cyclohydrolase (129 aa).

Asp-76 serves as a coordination point for Mg(2+). Cys-77 contacts Zn(2+). Positions 78 and 80 each coordinate Mg(2+). Zn(2+) contacts are provided by Cys-97 and Cys-104.

The protein belongs to the PRA-CH family. As to quaternary structure, homodimer. It depends on Mg(2+) as a cofactor. Zn(2+) is required as a cofactor.

The protein resides in the cytoplasm. The enzyme catalyses 1-(5-phospho-beta-D-ribosyl)-5'-AMP + H2O = 1-(5-phospho-beta-D-ribosyl)-5-[(5-phospho-beta-D-ribosylamino)methylideneamino]imidazole-4-carboxamide. Its pathway is amino-acid biosynthesis; L-histidine biosynthesis; L-histidine from 5-phospho-alpha-D-ribose 1-diphosphate: step 3/9. Catalyzes the hydrolysis of the adenine ring of phosphoribosyl-AMP. The chain is Phosphoribosyl-AMP cyclohydrolase from Methylibium petroleiphilum (strain ATCC BAA-1232 / LMG 22953 / PM1).